A 20-amino-acid polypeptide reads, in one-letter code: Citrate synthase (20 aa).

This sequence belongs to the citrate synthase family. Homodimer.

The enzyme catalyses oxaloacetate + acetyl-CoA + H2O = citrate + CoA + H(+). It functions in the pathway carbohydrate metabolism; tricarboxylic acid cycle; isocitrate from oxaloacetate: step 1/2. The sequence is that of Citrate synthase from Populus euphratica (Euphrates poplar).